We begin with the raw amino-acid sequence, 367 residues long: Glutamate 5-kinase (367 aa).

Lys-8 contributes to the ATP binding site. Ser-49, Asp-136, and Asn-148 together coordinate substrate. ATP is bound by residues 168–169 (TD) and 210–216 (TGGMATK). The region spanning 275-353 (TGKLLLDAGA…DQIVQILGYE (79 aa)) is the PUA domain.

This sequence belongs to the glutamate 5-kinase family.

The protein localises to the cytoplasm. It catalyses the reaction L-glutamate + ATP = L-glutamyl 5-phosphate + ADP. Its pathway is amino-acid biosynthesis; L-proline biosynthesis; L-glutamate 5-semialdehyde from L-glutamate: step 1/2. Catalyzes the transfer of a phosphate group to glutamate to form L-glutamate 5-phosphate. This chain is Glutamate 5-kinase, found in Synechococcus elongatus (strain ATCC 33912 / PCC 7942 / FACHB-805) (Anacystis nidulans R2).